The chain runs to 499 residues: Beta-amylase (499 aa).

3 residues coordinate substrate: aspartate 55, histidine 95, and aspartate 103. Glutamate 188 functions as the Proton donor in the catalytic mechanism. 3 residues coordinate substrate: lysine 298, histidine 303, and threonine 345. Glutamate 383 functions as the Proton acceptor in the catalytic mechanism. Substrate is bound by residues 384-385 and arginine 423; that span reads NA.

Belongs to the glycosyl hydrolase 14 family. In terms of assembly, homotetramer.

The enzyme catalyses Hydrolysis of (1-&gt;4)-alpha-D-glucosidic linkages in polysaccharides so as to remove successive maltose units from the non-reducing ends of the chains.. This chain is Beta-amylase (BMY1), found in Ipomoea batatas (Sweet potato).